Here is a 313-residue protein sequence, read N- to C-terminus: Maintenance of mitochondrial morphology protein 1 (313 aa).

Residues 1 to 12 are Lumenal-facing; the sequence is MIHLPQGSFTQG. Residues 13–33 traverse the membrane as a helical segment; the sequence is LIVGQLLTLAIIYVFLRFFLF. Residues 34-313 are Cytoplasmic-facing; it reads CSPIPKSVAN…APQEESSNED (280 aa). The span at 42–63 shows a compositional bias: polar residues; sequence ANSPKQTGNETPDETPSTPLSN. A disordered region spans residues 42 to 65; that stretch reads ANSPKQTGNETPDETPSTPLSNNK. The SMP-LTD domain maps to 90–288; the sequence is EPESLDWFNV…SPQFQQIAIP (199 aa).

This sequence belongs to the MMM1 family. In terms of assembly, homodimer. Component of the ER-mitochondria encounter structure (ERMES) or MDM complex, composed of mmm1, mdm10, mdm12 and mdm34. A mmm1 homodimer associates with one molecule of mdm12 on each side in a pairwise head-to-tail manner, and the SMP-LTD domains of mmm1 and mdm12 generate a continuous hydrophobic tunnel for phospholipid trafficking.

It localises to the endoplasmic reticulum membrane. Its function is as follows. Component of the ERMES/MDM complex, which serves as a molecular tether to connect the endoplasmic reticulum (ER) and mitochondria. Components of this complex are involved in the control of mitochondrial shape and protein biogenesis, and function in nonvesicular lipid trafficking between the ER and mitochondria. The mdm12-mmm1 subcomplex functions in the major beta-barrel assembly pathway that is responsible for biogenesis of all outer membrane beta-barrel proteins, and acts in a late step after the SAM complex. The mdm10-mdm12-mmm1 subcomplex further acts in the TOM40-specific pathway after the action of the mdm12-mmm1 complex. Essential for establishing and maintaining the structure of mitochondria and maintenance of mtDNA nucleoids. This Schizosaccharomyces pombe (strain 972 / ATCC 24843) (Fission yeast) protein is Maintenance of mitochondrial morphology protein 1.